The following is a 280-amino-acid chain: Elongation factor Ts (280 aa).

Residues 82-85 (TDFV) are involved in Mg(2+) ion dislocation from EF-Tu.

This sequence belongs to the EF-Ts family.

Its subcellular location is the cytoplasm. Functionally, associates with the EF-Tu.GDP complex and induces the exchange of GDP to GTP. It remains bound to the aminoacyl-tRNA.EF-Tu.GTP complex up to the GTP hydrolysis stage on the ribosome. In Baumannia cicadellinicola subsp. Homalodisca coagulata, this protein is Elongation factor Ts.